Consider the following 312-residue polypeptide: Methionyl-tRNA formyltransferase (312 aa).

107–110 is a binding site for (6S)-5,6,7,8-tetrahydrofolate; the sequence is SLLP.

This sequence belongs to the Fmt family.

It carries out the reaction L-methionyl-tRNA(fMet) + (6R)-10-formyltetrahydrofolate = N-formyl-L-methionyl-tRNA(fMet) + (6S)-5,6,7,8-tetrahydrofolate + H(+). Its function is as follows. Attaches a formyl group to the free amino group of methionyl-tRNA(fMet). The formyl group appears to play a dual role in the initiator identity of N-formylmethionyl-tRNA by promoting its recognition by IF2 and preventing the misappropriation of this tRNA by the elongation apparatus. The sequence is that of Methionyl-tRNA formyltransferase from Borreliella burgdorferi (strain ZS7) (Borrelia burgdorferi).